Here is a 67-residue protein sequence, read N- to C-terminus: Large ribosomal subunit protein uL29 (67 aa).

It belongs to the universal ribosomal protein uL29 family.

The protein is Large ribosomal subunit protein uL29 of Desulforudis audaxviator (strain MP104C).